We begin with the raw amino-acid sequence, 155 residues long: 6,7-dimethyl-8-ribityllumazine synthase (155 aa).

5-amino-6-(D-ribitylamino)uracil is bound by residues F23, 57-59 (AFE), and 81-83 (AVI). A (2S)-2-hydroxy-3-oxobutyl phosphate-binding site is contributed by 86–87 (ST). The Proton donor role is filled by H89. F114 serves as a coordination point for 5-amino-6-(D-ribitylamino)uracil. R128 lines the (2S)-2-hydroxy-3-oxobutyl phosphate pocket.

This sequence belongs to the DMRL synthase family.

The enzyme catalyses (2S)-2-hydroxy-3-oxobutyl phosphate + 5-amino-6-(D-ribitylamino)uracil = 6,7-dimethyl-8-(1-D-ribityl)lumazine + phosphate + 2 H2O + H(+). It participates in cofactor biosynthesis; riboflavin biosynthesis; riboflavin from 2-hydroxy-3-oxobutyl phosphate and 5-amino-6-(D-ribitylamino)uracil: step 1/2. Its function is as follows. Catalyzes the formation of 6,7-dimethyl-8-ribityllumazine by condensation of 5-amino-6-(D-ribitylamino)uracil with 3,4-dihydroxy-2-butanone 4-phosphate. This is the penultimate step in the biosynthesis of riboflavin. The protein is 6,7-dimethyl-8-ribityllumazine synthase of Citrifermentans bemidjiense (strain ATCC BAA-1014 / DSM 16622 / JCM 12645 / Bem) (Geobacter bemidjiensis).